Here is a 338-residue protein sequence, read N- to C-terminus: UPF0284 protein PAE0372 (338 aa).

This sequence belongs to the UPF0284 family.

This is UPF0284 protein PAE0372 from Pyrobaculum aerophilum (strain ATCC 51768 / DSM 7523 / JCM 9630 / CIP 104966 / NBRC 100827 / IM2).